Consider the following 416-residue polypeptide: MDIMRSVVGMVVLLAIAFLLSVNKKSISLRTVGAALLLQIAIGGIMLYFPPGKWAVEQAALGVHKVMSYSDAGSAFIFGSLVGPKMDVLFDGAGFIFAFRVLPAIIFVTALISLLYYIGVMGLLIRILGSIFQKALNISKIESFVAVTTIFLGQNEIPAIVKPFIDRMNRNELFTAICSGMASIAGSMMIGYAGMGVPIDYLLAASLMAIPGGILFARILSPATEPSQVTFENLSFSETPPKSFIEAAASGAMTGLKIAAGVATVVMAFVAIIALINGIIGGIGGWFGFANASLESIFGYVLAPLAWIMGVDWSDANLAGSLIGQKLAINEFVAYLSFSPYLQTGGTLEVKTIAIISFALCGFANFGSIGVVVGAFSAISPKRAPEIAQLGLRALAAATLSNLMSATIAGFFIGLA.

Over 1–2 the chain is Periplasmic; that stretch reads MD. A helical transmembrane segment spans residues 3–23; the sequence is IMRSVVGMVVLLAIAFLLSVN. The Cytoplasmic portion of the chain corresponds to 24-31; it reads KKSISLRT. The chain crosses the membrane as a helical span at residues 32 to 52; it reads VGAALLLQIAIGGIMLYFPPG. The Periplasmic segment spans residues 53–104; that stretch reads KWAVEQAALGVHKVMSYSDAGSAFIFGSLVGPKMDVLFDGAGFIFAFRVLPA. The chain crosses the membrane as a helical span at residues 105–125; it reads IIFVTALISLLYYIGVMGLLI. Over 126 to 172 the chain is Cytoplasmic; that stretch reads RILGSIFQKALNISKIESFVAVTTIFLGQNEIPAIVKPFIDRMNRNE. A helical transmembrane segment spans residues 173–193; it reads LFTAICSGMASIAGSMMIGYA. Topologically, residues 194–196 are periplasmic; it reads GMG. The chain crosses the membrane as a helical span at residues 197–217; that stretch reads VPIDYLLAASLMAIPGGILFA. Residues 218–268 are Cytoplasmic-facing; sequence RILSPATEPSQVTFENLSFSETPPKSFIEAAASGAMTGLKIAAGVATVVMA. A helical transmembrane segment spans residues 269-289; that stretch reads FVAIIALINGIIGGIGGWFGF. At 290–352 the chain is on the periplasmic side; it reads ANASLESIFG…QTGGTLEVKT (63 aa). A helical transmembrane segment spans residues 353 to 373; that stretch reads IAIISFALCGFANFGSIGVVV. The Cytoplasmic portion of the chain corresponds to 374 to 394; the sequence is GAFSAISPKRAPEIAQLGLRA. Residues 395–415 traverse the membrane as a helical segment; it reads LAAATLSNLMSATIAGFFIGL. Position 416 (alanine 416) is a topological domain, periplasmic.

The protein belongs to the concentrative nucleoside transporter (CNT) (TC 2.A.41) family.

It is found in the cell inner membrane. In terms of biological role, could be involved in pseudouridine transport. The sequence is that of Putative pseudouridine transporter (psuT) from Escherichia coli (strain K12).